Consider the following 120-residue polypeptide: UPF0231 protein YacL (120 aa).

It belongs to the UPF0231 family.

This Salmonella heidelberg (strain SL476) protein is UPF0231 protein YacL.